Consider the following 553-residue polypeptide: Arginine--tRNA ligase (553 aa).

The short motif at 130-140 (ANPTGDLHIGH) is the 'HIGH' region element.

The protein belongs to the class-I aminoacyl-tRNA synthetase family. In terms of assembly, monomer.

The protein resides in the cytoplasm. The catalysed reaction is tRNA(Arg) + L-arginine + ATP = L-arginyl-tRNA(Arg) + AMP + diphosphate. The chain is Arginine--tRNA ligase from Staphylococcus epidermidis (strain ATCC 35984 / DSM 28319 / BCRC 17069 / CCUG 31568 / BM 3577 / RP62A).